A 420-amino-acid polypeptide reads, in one-letter code: Meiotically up-regulated gene 137 protein (420 aa).

Residues 10 to 232 form the BAR domain; sequence NEKPLGDQRA…QNSLTPQKKI (223 aa). Residues 279-345 enclose the SH3 domain; the sequence is KETVFVKAIY…PVNYCTRIYD (67 aa). Positions 398–420 are disordered; it reads SQNVEASSQPIKIRKPLPEIPNK.

The protein resides in the cytoplasm. It localises to the nucleus. Functionally, has a role in meiosis and sporulation. The polypeptide is Meiotically up-regulated gene 137 protein (mug137) (Schizosaccharomyces pombe (strain 972 / ATCC 24843) (Fission yeast)).